The sequence spans 213 residues: Redox-sensing transcriptional repressor Rex (213 aa).

Residues 16 to 55 (VYSRFLERMDRNGIVTVSSGEIAEGVGVSSAQVRKDLAYF) constitute a DNA-binding region (H-T-H motif). An NAD(+)-binding site is contributed by 90-95 (GAGNLG).

This sequence belongs to the transcriptional regulatory Rex family. Homodimer.

It is found in the cytoplasm. Its function is as follows. Modulates transcription in response to changes in cellular NADH/NAD(+) redox state. This is Redox-sensing transcriptional repressor Rex from Pelotomaculum thermopropionicum (strain DSM 13744 / JCM 10971 / SI).